A 479-amino-acid polypeptide reads, in one-letter code: Fibrinogen beta chain (479 aa).

The signal sequence occupies residues 1 to 18 (MRHLWLLLLSVSLVQTQA). The disordered stretch occupies residues 20 to 82 (TTDSDKVDLS…VERKPPDAGG (63 aa)). The segment at 33 to 35 (GHR) is beta-chain polymerization, binding distal domain of another fibrin. Composition is skewed to basic and acidic residues over residues 35 to 45 (RPVDRRKEEPP) and 64 to 78 (AKVD…RKPP). 2 cysteine pairs are disulfide-bonded: cysteine 219-cysteine 304 and cysteine 229-cysteine 258. A Fibrinogen C-terminal domain is found at 220 to 476 (NIPVVSGKEC…RMSMKIRPVF (257 aa)). N-linked (GlcNAc...) asparagine glycosylation occurs at asparagine 382. A disulfide bond links cysteine 412 and cysteine 425.

In terms of assembly, heterohexamer; disulfide linked. Contains 2 sets of 3 non-identical chains (alpha, beta and gamma). The 2 heterotrimers are in head to head conformation with the N-termini in a small central domain. Post-translationally, conversion of fibrinogen to fibrin is triggered by thrombin, which cleaves fibrinopeptides A and B from alpha and beta chains, and thus exposes the N-terminal polymerization sites responsible for the formation of the soft clot.

It is found in the secreted. In terms of biological role, cleaved by the protease thrombin to yield monomers which, together with fibrinogen alpha (FGA) and fibrinogen gamma (FGG), polymerize to form an insoluble fibrin matrix. Fibrin has a major function in hemostasis as one of the primary components of blood clots. In addition, functions during the early stages of wound repair to stabilize the lesion and guide cell migration during re-epithelialization. Was originally thought to be essential for platelet aggregation, based on in vitro studies using anticoagulated blood. However subsequent studies have shown that it is not absolutely required for thrombus formation in vivo. Enhances expression of SELP in activated platelets. Maternal fibrinogen is essential for successful pregnancy. Fibrin deposition is also associated with infection, where it protects against IFNG-mediated hemorrhage. May also facilitate the antibacterial immune response via both innate and T-cell mediated pathways. The chain is Fibrinogen beta chain (Fgb) from Rattus norvegicus (Rat).